A 103-amino-acid polypeptide reads, in one-letter code: Integration host factor subunit beta (103 aa).

Residues 59–82 (RLGRNPKTGESVALPGKHVPHFKP) are disordered.

This sequence belongs to the bacterial histone-like protein family. In terms of assembly, heterodimer of an alpha and a beta chain.

This protein is one of the two subunits of integration host factor, a specific DNA-binding protein that functions in genetic recombination as well as in transcriptional and translational control. The chain is Integration host factor subunit beta from Xanthomonas oryzae pv. oryzae (strain MAFF 311018).